The sequence spans 471 residues: MIEIQFYNSLSGRKEKFSPSDPNRVTVYSCGPTVYNFAHIGNLRAFLFVDVLRRSLKLLGYGVDMTMNITDIDDKIIRDSIASKKSIIEFTAPWTKAFFEDLKTVSAEILEHYPKATDSIPEMVDIIQKLQKKGLVYKKDESLYFSIQKFQNYGKLSKIDTSGMKTGTRYDTDEYEKEDVRDFVLWKSPKLEGETSWDTLVGTGRPGWHLECSAMIRKVYGSGVDIHTGGVDLLFPHHENEIAQSEGAFPEESFVKTWLHSEHLLVDGQKMSKSKGNFYTLRDLIQQGLDPKAIRFLLISTHYRSKLNFSTDRIAEASANIRKIQNCLDRILELEPDIKADFYFLFSIPFVQTWKKEFEESLADDLNISKALAVVFESVKQINSLLDTNQSDSKQRIEYIQILAYFDRILGVLNFESKKDLLDSEIDSLIEERQIARKNKDFARSDAIRDQLLAQGILIEDTKEGIRWRKK.

Cysteine 30 is a Zn(2+) binding site. The 'HIGH' region signature appears at 32–42; that stretch reads PTVYNFAHIGN. Zn(2+) contacts are provided by cysteine 212, histidine 237, and glutamate 241. The 'KMSKS' region signature appears at 270-274; it reads KMSKS. Position 273 (lysine 273) interacts with ATP.

This sequence belongs to the class-I aminoacyl-tRNA synthetase family. Monomer. The cofactor is Zn(2+).

Its subcellular location is the cytoplasm. The enzyme catalyses tRNA(Cys) + L-cysteine + ATP = L-cysteinyl-tRNA(Cys) + AMP + diphosphate. The chain is Cysteine--tRNA ligase from Leptospira interrogans serogroup Icterohaemorrhagiae serovar Lai (strain 56601).